We begin with the raw amino-acid sequence, 374 residues long: Methionine import ATP-binding protein MetN 2 (374 aa).

Residues 32 to 271 (VRFVGLGKTY…PQHEVSQTLL (240 aa)) enclose the ABC transporter domain. 68 to 75 (GRSGAGKS) serves as a coordination point for ATP.

This sequence belongs to the ABC transporter superfamily. Methionine importer (TC 3.A.1.24) family. The complex is composed of two ATP-binding proteins (MetN), two transmembrane proteins (MetI) and a solute-binding protein (MetQ).

It localises to the cell inner membrane. It catalyses the reaction L-methionine(out) + ATP + H2O = L-methionine(in) + ADP + phosphate + H(+). It carries out the reaction D-methionine(out) + ATP + H2O = D-methionine(in) + ADP + phosphate + H(+). Its function is as follows. Part of the ABC transporter complex MetNIQ involved in methionine import. Responsible for energy coupling to the transport system. The chain is Methionine import ATP-binding protein MetN 2 from Pseudomonas fluorescens (strain Pf0-1).